The chain runs to 1142 residues: Probable serine/threonine-protein kinase fhkB (1142 aa).

Residues methionine 1–tyrosine 16 show a composition bias toward polar residues. 3 disordered regions span residues methionine 1 to glutamine 359, asparagine 374 to glutamine 404, and glutamine 432 to valine 451. 2 stretches are compositionally biased toward low complexity: residues serine 17 to asparagine 72 and glutamine 83 to glutamine 157. Residues lysine 158–glutamine 178 show a composition bias toward polar residues. A coiled-coil region spans residues isoleucine 186–aspartate 302. A compositionally biased stretch (low complexity) spans glutamine 187 to proline 260. Acidic residues-rich tracts occupy residues glutamine 261–glutamate 277 and glutamate 283–serine 325. A compositionally biased stretch (low complexity) spans arginine 333–serine 348. Over residues asparagine 374–leucine 397 the composition is skewed to polar residues. Positions histidine 393–isoleucine 434 form a coiled coil. Positions glutamine 432–glutamine 443 are enriched in low complexity. The region spanning isoleucine 480–isoleucine 551 is the FHA domain. The Protein kinase domain occupies tyrosine 625 to phenylalanine 885. Residues isoleucine 631–valine 639 and lysine 654 each bind ATP. Catalysis depends on aspartate 747, which acts as the Proton acceptor. Positions phenylalanine 947–methionine 1142 are disordered. Residues asparagine 949 to histidine 1034 show a composition bias toward low complexity. A compositionally biased stretch (basic residues) spans asparagine 1035–asparagine 1067. Over residues asparagine 1068–histidine 1133 the composition is skewed to low complexity. Residues asparagine 1090 to tyrosine 1132 adopt a coiled-coil conformation.

It belongs to the protein kinase superfamily. CAMK Ser/Thr protein kinase family. CHK2 subfamily.

It catalyses the reaction L-seryl-[protein] + ATP = O-phospho-L-seryl-[protein] + ADP + H(+). The enzyme catalyses L-threonyl-[protein] + ATP = O-phospho-L-threonyl-[protein] + ADP + H(+). The polypeptide is Probable serine/threonine-protein kinase fhkB (fhkB) (Dictyostelium discoideum (Social amoeba)).